The primary structure comprises 415 residues: Serine hydroxymethyltransferase (415 aa).

Residues L117 and 121 to 123 (GHL) each bind (6S)-5,6,7,8-tetrahydrofolate. Residue K226 is modified to N6-(pyridoxal phosphate)lysine. E241 lines the (6S)-5,6,7,8-tetrahydrofolate pocket.

The protein belongs to the SHMT family. In terms of assembly, homodimer. Requires pyridoxal 5'-phosphate as cofactor.

The protein localises to the cytoplasm. The enzyme catalyses (6R)-5,10-methylene-5,6,7,8-tetrahydrofolate + glycine + H2O = (6S)-5,6,7,8-tetrahydrofolate + L-serine. It participates in one-carbon metabolism; tetrahydrofolate interconversion. Its pathway is amino-acid biosynthesis; glycine biosynthesis; glycine from L-serine: step 1/1. Catalyzes the reversible interconversion of serine and glycine with tetrahydrofolate (THF) serving as the one-carbon carrier. This reaction serves as the major source of one-carbon groups required for the biosynthesis of purines, thymidylate, methionine, and other important biomolecules. Also exhibits THF-independent aldolase activity toward beta-hydroxyamino acids, producing glycine and aldehydes, via a retro-aldol mechanism. This is Serine hydroxymethyltransferase from Bacillus licheniformis (strain ATCC 14580 / DSM 13 / JCM 2505 / CCUG 7422 / NBRC 12200 / NCIMB 9375 / NCTC 10341 / NRRL NRS-1264 / Gibson 46).